Reading from the N-terminus, the 187-residue chain is PsbQ-like protein 3, chloroplastic (187 aa).

Residues 1–32 (MAISKPPPLHFTFFHNQDSSIDTSDSNLALSI) constitute a chloroplast transit peptide. A thylakoid-targeting transit peptide spans 33–60 (DTSRRRRDVLLTISGTLIPQLFFFDRKR).

Belongs to the PsbQ family. As to quaternary structure, subunit of the lumenal protuberance of the NDH complex.

The protein localises to the plastid. The protein resides in the chloroplast thylakoid membrane. In terms of biological role, required for both formation and activity of the chloroplast NAD(P)H dehydrogenase (NDH) complex. This chain is PsbQ-like protein 3, chloroplastic (PQL3), found in Arabidopsis thaliana (Mouse-ear cress).